Consider the following 417-residue polypeptide: Acetate kinase (417 aa).

Residue Asn7 participates in Mg(2+) binding. ATP is bound at residue Lys14. Arg104 serves as a coordination point for substrate. Asp162 functions as the Proton donor/acceptor in the catalytic mechanism. ATP is bound by residues 222–226, 297–299, and 346–350; these read HLGNG, DMR, and GIGEN. Glu401 is a binding site for Mg(2+).

It belongs to the acetokinase family. Homodimer. Requires Mg(2+) as cofactor. It depends on Mn(2+) as a cofactor.

The protein localises to the cytoplasm. The catalysed reaction is acetate + ATP = acetyl phosphate + ADP. The protein operates within metabolic intermediate biosynthesis; acetyl-CoA biosynthesis; acetyl-CoA from acetate: step 1/2. Functionally, catalyzes the formation of acetyl phosphate from acetate and ATP. Can also catalyze the reverse reaction. The polypeptide is Acetate kinase (Chloroherpeton thalassium (strain ATCC 35110 / GB-78)).